A 453-amino-acid polypeptide reads, in one-letter code: 3-phosphoshikimate 1-carboxyvinyltransferase (453 aa).

The 3-phosphoshikimate site is built by lysine 28, serine 29, and arginine 33. Lysine 28 contacts phosphoenolpyruvate. Residues glycine 101 and arginine 129 each coordinate phosphoenolpyruvate. 4 residues coordinate 3-phosphoshikimate: serine 174, glutamine 176, aspartate 326, and lysine 353. Glutamine 176 is a binding site for phosphoenolpyruvate. Aspartate 326 acts as the Proton acceptor in catalysis. The phosphoenolpyruvate site is built by arginine 357 and arginine 405.

Belongs to the EPSP synthase family. In terms of assembly, monomer.

The protein localises to the cytoplasm. It carries out the reaction 3-phosphoshikimate + phosphoenolpyruvate = 5-O-(1-carboxyvinyl)-3-phosphoshikimate + phosphate. It functions in the pathway metabolic intermediate biosynthesis; chorismate biosynthesis; chorismate from D-erythrose 4-phosphate and phosphoenolpyruvate: step 6/7. Its function is as follows. Catalyzes the transfer of the enolpyruvyl moiety of phosphoenolpyruvate (PEP) to the 5-hydroxyl of shikimate-3-phosphate (S3P) to produce enolpyruvyl shikimate-3-phosphate and inorganic phosphate. The polypeptide is 3-phosphoshikimate 1-carboxyvinyltransferase (Zymomonas mobilis subsp. mobilis (strain ATCC 31821 / ZM4 / CP4)).